The primary structure comprises 163 residues: GTP-dependent dephospho-CoA kinase (163 aa).

5 residues coordinate GTP: Asp-38, Val-39, Asp-57, Glu-115, and Asp-138.

It belongs to the GTP-dependent DPCK family.

The enzyme catalyses 3'-dephospho-CoA + GTP = GDP + CoA + H(+). Its pathway is cofactor biosynthesis; coenzyme A biosynthesis. Catalyzes the GTP-dependent phosphorylation of the 3'-hydroxyl group of dephosphocoenzyme A to form coenzyme A (CoA). The polypeptide is GTP-dependent dephospho-CoA kinase (Methanothermobacter thermautotrophicus (strain ATCC 29096 / DSM 1053 / JCM 10044 / NBRC 100330 / Delta H) (Methanobacterium thermoautotrophicum)).